Consider the following 262-residue polypeptide: Cytochrome c oxidase subunit 3 (262 aa).

6 helical membrane passes run 39 to 59 (YDIS…YQWW), 83 to 103 (GMIL…WAFF), 120 to 140 (MGII…ILLA), 163 to 183 (GLFF…YEYI), 201 to 221 (ATGF…VCLL), and 240 to 260 (AWYW…IYWW).

Belongs to the cytochrome c oxidase subunit 3 family. Component of the cytochrome c oxidase (complex IV, CIV), a multisubunit enzyme composed of a catalytic core of 3 subunits and several supernumerary subunits. The complex exists as a monomer or a dimer and forms supercomplexes (SCs) in the inner mitochondrial membrane with ubiquinol-cytochrome c oxidoreductase (cytochrome b-c1 complex, complex III, CIII).

The protein localises to the mitochondrion inner membrane. It carries out the reaction 4 Fe(II)-[cytochrome c] + O2 + 8 H(+)(in) = 4 Fe(III)-[cytochrome c] + 2 H2O + 4 H(+)(out). Component of the cytochrome c oxidase, the last enzyme in the mitochondrial electron transport chain which drives oxidative phosphorylation. The respiratory chain contains 3 multisubunit complexes succinate dehydrogenase (complex II, CII), ubiquinol-cytochrome c oxidoreductase (cytochrome b-c1 complex, complex III, CIII) and cytochrome c oxidase (complex IV, CIV), that cooperate to transfer electrons derived from NADH and succinate to molecular oxygen, creating an electrochemical gradient over the inner membrane that drives transmembrane transport and the ATP synthase. Cytochrome c oxidase is the component of the respiratory chain that catalyzes the reduction of oxygen to water. Electrons originating from reduced cytochrome c in the intermembrane space (IMS) are transferred via the dinuclear copper A center (CU(A)) of subunit 2 and heme A of subunit 1 to the active site in subunit 1, a binuclear center (BNC) formed by heme A3 and copper B (CU(B)). The BNC reduces molecular oxygen to 2 water molecules using 4 electrons from cytochrome c in the IMS and 4 protons from the mitochondrial matrix. The polypeptide is Cytochrome c oxidase subunit 3 (mt:CoIII) (Drosophila yakuba (Fruit fly)).